A 430-amino-acid polypeptide reads, in one-letter code: Elongation factor 1-gamma (430 aa).

Positions Val-2–Ser-84 constitute a GST N-terminal domain. Residues Ser-85 to Phe-213 enclose the GST C-terminal domain. Composition is skewed to basic and acidic residues over residues Lys-232 to Glu-255 and Pro-269 to Met-278. The disordered stretch occupies residues Lys-232–Met-278. Positions Ser-271–Lys-430 constitute an EF-1-gamma C-terminal domain.

In terms of assembly, EF-1 is composed of four subunits: alpha, beta, delta, and gamma.

Probably plays a role in anchoring the complex to other cellular components. This chain is Elongation factor 1-gamma, found in Artemia salina (Brine shrimp).